Here is an 82-residue protein sequence, read N- to C-terminus: ATP synthase subunit c (82 aa).

2 helical membrane passes run 7 to 27 (AASV…PGIG) and 57 to 77 (FAFM…LLFA).

The protein belongs to the ATPase C chain family. In terms of assembly, F-type ATPases have 2 components, F(1) - the catalytic core - and F(0) - the membrane proton channel. F(1) has five subunits: alpha(3), beta(3), gamma(1), delta(1), epsilon(1). F(0) has four main subunits: a(1), b(1), b'(1) and c(10-14). The alpha and beta chains form an alternating ring which encloses part of the gamma chain. F(1) is attached to F(0) by a central stalk formed by the gamma and epsilon chains, while a peripheral stalk is formed by the delta, b and b' chains.

The protein resides in the cellular thylakoid membrane. F(1)F(0) ATP synthase produces ATP from ADP in the presence of a proton or sodium gradient. F-type ATPases consist of two structural domains, F(1) containing the extramembraneous catalytic core and F(0) containing the membrane proton channel, linked together by a central stalk and a peripheral stalk. During catalysis, ATP synthesis in the catalytic domain of F(1) is coupled via a rotary mechanism of the central stalk subunits to proton translocation. Its function is as follows. Key component of the F(0) channel; it plays a direct role in translocation across the membrane. A homomeric c-ring of between 10-14 subunits forms the central stalk rotor element with the F(1) delta and epsilon subunits. This is ATP synthase subunit c from Prochlorococcus marinus (strain NATL1A).